We begin with the raw amino-acid sequence, 762 residues long: Catalase-peroxidase (762 aa).

Positions 1–22 are disordered; that stretch reads MAEAKCPFSQSRSNANVAGGGT. The tryptophyl-tyrosyl-methioninium (Trp-Tyr) (with M-268) cross-link spans 96–242; it reads WHSAGTYRVF…LAASHMGLIY (147 aa). The active-site Proton acceptor is the His97. The tryptophyl-tyrosyl-methioninium (Tyr-Met) (with W-96) cross-link spans 242 to 268; sequence YVNPEGPDGNPDPVAAARDIRTTFGRM. Residue His283 participates in heme b binding.

This sequence belongs to the peroxidase family. Peroxidase/catalase subfamily. Homodimer or homotetramer. Heme b serves as cofactor. In terms of processing, formation of the three residue Trp-Tyr-Met cross-link is important for the catalase, but not the peroxidase activity of the enzyme.

It is found in the cytoplasm. It carries out the reaction H2O2 + AH2 = A + 2 H2O. It catalyses the reaction 2 H2O2 = O2 + 2 H2O. Bifunctional enzyme with both catalase and broad-spectrum peroxidase activity. This is Catalase-peroxidase from Aspergillus niger (strain ATCC MYA-4892 / CBS 513.88 / FGSC A1513).